The primary structure comprises 228 residues: MQKLKQQVFEANMDLPRYGLVTFTWGNVSAIDRERGLVVIKPSGVAYETMKADDMVVVDMSGKVVEGEYRPSSDTATYLELYRRYPSLGGIVHTHSTHATAWAQAGLAIPALGTTHADYFFGDIPCTRGLSEEEVQGEYELNTGKVIIETLGDAEPLHTPGIVVYQHGPFAWGKDAHDAVHNAVVMEEVAKMAWIARSINPQLNHIDSFLMNKHFMRKHGPNAYYGQK.

Substrate-binding positions include 26 to 27 (GN), 43 to 44 (SG), and 72 to 73 (SS). Zn(2+)-binding residues include aspartate 74, histidine 93, and histidine 95. The Proton donor/acceptor role is filled by aspartate 118. Histidine 167 contacts Zn(2+). The active-site Proton donor/acceptor is the tyrosine 225.

This sequence belongs to the aldolase class II family. AraD/FucA subfamily. Zn(2+) serves as cofactor.

It catalyses the reaction L-ribulose 5-phosphate = D-xylulose 5-phosphate. It functions in the pathway cofactor degradation; L-ascorbate degradation; D-xylulose 5-phosphate from L-ascorbate: step 4/4. Its function is as follows. Catalyzes the isomerization of L-ribulose 5-phosphate to D-xylulose 5-phosphate. Is involved in the anaerobic L-ascorbate utilization. This Shigella sonnei (strain Ss046) protein is L-ribulose-5-phosphate 4-epimerase UlaF.